Consider the following 127-residue polypeptide: Spore germination protein 1 (127 aa).

Residues 1–25 (MNIKNSLILIISTIFVLSMINGGLT) form the signal peptide. 2 N-linked (GlcNAc...) asparagine glycosylation sites follow: Asn54 and Asn118.

It belongs to the Dictyostelium gerABC family.

It localises to the secreted. In Dictyostelium discoideum (Social amoeba), this protein is Spore germination protein 1 (gerA).